The following is a 1004-amino-acid chain: Liprin-beta homolog (1004 aa).

2 stretches are compositionally biased toward low complexity: residues 50–63 (NGNS…TIGS) and 149–161 (SPPS…SSSL). Disordered stretches follow at residues 50-122 (NGNS…RSSR) and 135-161 (HRTD…SSSL). Coiled coils occupy residues 280–328 (CQEL…VNQS) and 364–396 (DEMS…ALDE). Disordered stretches follow at residues 341–366 (HTNG…DDEM), 432–497 (PSDS…GGNQ), 528–550 (NGNE…GKAS), and 648–686 (FSKL…LGTV). A compositionally biased stretch (polar residues) spans 434–453 (DSMSHSTSFPVSLSSTTSNG). Positions 458-474 (STVQSSSSYNSSLSAVS) are enriched in low complexity. 2 stretches are compositionally biased toward polar residues: residues 531-541 (EGANHNYSSAS) and 648-684 (FSKL…NHLG). SAM domains lie at 698–762 (WRSE…IEED), 770–833 (WDVH…LKKA), and 858–930 (VVRW…LLGP).

The protein belongs to the liprin family. Liprin-beta subfamily. Expressed in pharyngeal muscle, particularly posterior bulb, adjacent to the dorsal and ventral cord (but not in ventral cord neurons), and in body wall muscles.

In terms of biological role, involved in the regulation of synaptic function at neuromuscular junctions. Together with the liprin-alpha protein syd-2, may play a role in regulating the structure of the neuronal region, called the active zone, from which synaptic vesicles send neurotransmitter signals across the synapse. Does not seem to be required for neuronal development. May regulate the disassembly of focal adhesions. Does not bind receptor-like tyrosine phosphatases type 2A. This is Liprin-beta homolog from Caenorhabditis elegans.